Reading from the N-terminus, the 173-residue chain is MIDADGFRANVGIILANTQGQVLWAKRIGHNAWQFPQGGIDRGETPMDAMYRELWEEVGLHPRHVDLLAVTQDWLRYRLPKRYVRHGQYPLCIGQKQKWFLLRLDEPNTQHIRFDEGKPEFDNWQWVSYWYPLGQVIHFKRSVYRRALQELVPELPLQQGLIIPEQNNHLLVE.

One can recognise a Nudix hydrolase domain in the interval 6–149 (GFRANVGIIL…KRSVYRRALQ (144 aa)). The Nudix box signature appears at 38-59 (GGIDRGETPMDAMYRELWEEVG).

It belongs to the Nudix hydrolase family. RppH subfamily. Requires a divalent metal cation as cofactor.

Its function is as follows. Accelerates the degradation of transcripts by removing pyrophosphate from the 5'-end of triphosphorylated RNA, leading to a more labile monophosphorylated state that can stimulate subsequent ribonuclease cleavage. In Psychrobacter cryohalolentis (strain ATCC BAA-1226 / DSM 17306 / VKM B-2378 / K5), this protein is RNA pyrophosphohydrolase.